The primary structure comprises 116 residues: Large ribosomal subunit protein bL20 (116 aa).

It belongs to the bacterial ribosomal protein bL20 family.

Functionally, binds directly to 23S ribosomal RNA and is necessary for the in vitro assembly process of the 50S ribosomal subunit. It is not involved in the protein synthesizing functions of that subunit. This is Large ribosomal subunit protein bL20 from Nitratiruptor sp. (strain SB155-2).